The sequence spans 533 residues: Solute carrier family 2, facilitated glucose transporter member 2 (533 aa).

Residues 1–17 lie on the Cytoplasmic side of the membrane; the sequence is MDGKSKMQAEKHLTGTL. A helical membrane pass occupies residues 18–38; it reads VLSVFTAVLGFFQYGYSLGVI. Over 39–110 the chain is Extracellular; that stretch reads NAPQKVIEAH…SPHILTMYWS (72 aa). 2 N-linked (GlcNAc...) asparagine glycosylation sites follow: asparagine 64 and asparagine 69. The helical transmembrane segment at 111 to 131 threads the bilayer; the sequence is LSVSMFAVGGMVSSFTVGWIG. The Cytoplasmic portion of the chain corresponds to 132-136; the sequence is DRLGR. Residues 137–157 form a helical membrane-spanning segment; that stretch reads VKAMLVVNVLSIAGNLLMGLA. The Extracellular segment spans residues 158-163; it reads KMGPSH. The chain crosses the membrane as a helical span at residues 164-184; the sequence is ILIIAGRAITGLYCGLSSGLV. At 185 to 199 the chain is on the cytoplasmic side; sequence PMYVSEVSPTALRGA. The chain crosses the membrane as a helical span at residues 200–220; sequence LGTLHQLAIVTGILISQVLGL. Glutamine 205 lines the D-glucose pocket. At 221-229 the chain is on the extracellular side; it reads DFLLGNDEL. A helical membrane pass occupies residues 230–250; it reads WPLLLGLSGVAALLQFFLLLL. Residues 251-315 lie on the Cytoplasmic side of the membrane; sequence CPESPRYLYI…LFSSSKYRQA (65 aa). A helical transmembrane segment spans residues 316–336; that stretch reads VIVALMVQISQQFSGINAIFY. Residues 326 to 327 and asparagine 332 contribute to the D-glucose site; that span reads QQ. At 337–350 the chain is on the extracellular side; the sequence is YSTNIFQRAGVGQP. A helical transmembrane segment spans residues 351–371; sequence VYATIGVGVVNTVFTVISVFL. Asparagine 361 lines the D-glucose pocket. Residues 372–379 lie on the Cytoplasmic side of the membrane; the sequence is VEKAGRRS. A helical transmembrane segment spans residues 380–400; it reads LFLAGLMGMLISAVAMTVGLV. At 401–413 the chain is on the extracellular side; the sequence is LLSQFAWMSYVSM. Residues 414-434 traverse the membrane as a helical segment; sequence VAIFLFVIFFEVGPGPIPWFI. 2 residues coordinate D-glucose: glutamate 424 and tryptophan 432. Residues 435-445 are Cytoplasmic-facing; the sequence is VAELFSQGPRP. Residues 446–466 traverse the membrane as a helical segment; the sequence is AAIAVAGFCNWACNFIVGMCF. The Extracellular portion of the chain corresponds to 467 to 471; sequence QYIAD. The helical transmembrane segment at 472-492 threads the bilayer; that stretch reads LCGPYVFVVFAVLLLVFFLFA. The Cytoplasmic segment spans residues 493 to 533; that stretch reads YLKVPETKGKSFEEIAAAFRRKKLPAKSMTELEDLRGGEEA.

This sequence belongs to the major facilitator superfamily. Sugar transporter (TC 2.A.1.1) family. Glucose transporter subfamily.

Its subcellular location is the cell membrane. It catalyses the reaction D-glucose(out) = D-glucose(in). It carries out the reaction D-fructose(out) = D-fructose(in). The enzyme catalyses L-dehydroascorbate(out) = L-dehydroascorbate(in). The catalysed reaction is D-galactose(in) = D-galactose(out). With respect to regulation, D-glucose and maltose competitively inhibit fructose transport. D-glucose, D-fructose and maltose inhibit deoxyglucose transport. Facilitative hexose transporter that mediates the transport of glucose, fructose and galactose. Likely mediates the bidirectional transfer of glucose across the plasma membrane of hepatocytes and is responsible for uptake of glucose by the beta cells. The chain is Solute carrier family 2, facilitated glucose transporter member 2 from Gallus gallus (Chicken).